The chain runs to 318 residues: NADH-ubiquinone oxidoreductase chain 1 (318 aa).

Transmembrane regions (helical) follow at residues 2 to 22, 76 to 96, 100 to 120, 146 to 166, 171 to 191, 222 to 242, 253 to 273, and 294 to 314; these read PMIN…FLML, ALAL…IPLI, LGLL…LWSG, LALI…SALI, HSWL…STLA, LFFM…TMIF, ELYT…FLWI, and LPLT…TSGI.

Belongs to the complex I subunit 1 family. As to quaternary structure, core subunit of respiratory chain NADH dehydrogenase (Complex I) which is composed of 45 different subunits.

The protein resides in the mitochondrion inner membrane. It carries out the reaction a ubiquinone + NADH + 5 H(+)(in) = a ubiquinol + NAD(+) + 4 H(+)(out). In terms of biological role, core subunit of the mitochondrial membrane respiratory chain NADH dehydrogenase (Complex I) which catalyzes electron transfer from NADH through the respiratory chain, using ubiquinone as an electron acceptor. Essential for the catalytic activity and assembly of complex I. This chain is NADH-ubiquinone oxidoreductase chain 1 (MT-ND1), found in Pongo abelii (Sumatran orangutan).